A 457-amino-acid chain; its full sequence is UDP-N-acetylmuramate--L-alanine ligase (457 aa).

Position 117–123 (117–123 (GTHGKTT)) interacts with ATP.

The protein belongs to the MurCDEF family.

The protein localises to the cytoplasm. The enzyme catalyses UDP-N-acetyl-alpha-D-muramate + L-alanine + ATP = UDP-N-acetyl-alpha-D-muramoyl-L-alanine + ADP + phosphate + H(+). Its pathway is cell wall biogenesis; peptidoglycan biosynthesis. Functionally, cell wall formation. This is UDP-N-acetylmuramate--L-alanine ligase from Clostridium kluyveri (strain NBRC 12016).